The chain runs to 130 residues: MAAPVKKTGSKKSKKNVPNGVVHIQSTFNNTIVSISDTSGHVISWSSAGASGFKGARKGTPFAAQTAAEAAAKRALDQGMRQIEVLVRGPGSGRETAIRALQVAGLEITLIRDVTPLPHNGCRRPKRRRV.

It belongs to the universal ribosomal protein uS11 family. As to quaternary structure, part of the 30S ribosomal subunit. Interacts with proteins S7 and S18. Binds to IF-3.

In terms of biological role, located on the platform of the 30S subunit, it bridges several disparate RNA helices of the 16S rRNA. Forms part of the Shine-Dalgarno cleft in the 70S ribosome. This chain is Small ribosomal subunit protein uS11, found in Prochlorococcus marinus (strain MIT 9515).